The chain runs to 218 residues: Protein-methionine-sulfoxide reductase heme-binding subunit MsrQ (218 aa).

Transmembrane regions (helical) follow at residues 14–34 (LVHA…WQVW), 60–80 (LLLI…AVVI), 86–106 (LGLY…TLDL), 121–141 (PYIT…ITST), and 155–175 (LHML…WLVK).

The protein belongs to the MsrQ family. In terms of assembly, heterodimer of a catalytic subunit (MsrP) and a heme-binding subunit (MsrQ). Requires FMN as cofactor. Heme b is required as a cofactor.

Its subcellular location is the cell inner membrane. Its function is as follows. Part of the MsrPQ system that repairs oxidized periplasmic proteins containing methionine sulfoxide residues (Met-O), using respiratory chain electrons. Thus protects these proteins from oxidative-stress damage caused by reactive species of oxygen and chlorine generated by the host defense mechanisms. MsrPQ is essential for the maintenance of envelope integrity under bleach stress, rescuing a wide series of structurally unrelated periplasmic proteins from methionine oxidation. MsrQ provides electrons for reduction to the reductase catalytic subunit MsrP, using the quinone pool of the respiratory chain. This chain is Protein-methionine-sulfoxide reductase heme-binding subunit MsrQ, found in Xanthomonas axonopodis pv. citri (strain 306).